Here is a 435-residue protein sequence, read N- to C-terminus: Serine protease snk (435 aa).

The signal sequence occupies residues 1 to 27; sequence MIILWSLIVHLQLTCLHLILQTPNLEA. Residues 92-138 enclose the Clip domain; that stretch reads FCRRSFDGRSGYCILAYQCLHVIREYRVHGTRIDICTHRNNVPVICC. Disulfide bonds link cysteine 93–cysteine 137, cysteine 104–cysteine 127, cysteine 110–cysteine 138, cysteine 179–cysteine 303, cysteine 220–cysteine 236, cysteine 346–cysteine 366, and cysteine 377–cysteine 408. A Peptidase S1 domain is found at 186–432; it reads IVGGTPTRHG…YLDWIEKIAF (247 aa). The Charge relay system role is filled by histidine 235. A glycan (N-linked (GlcNAc...) asparagine) is linked at asparagine 255. Catalysis depends on aspartate 283, which acts as the Charge relay system. Serine 381 functions as the Charge relay system in the catalytic mechanism.

The protein belongs to the peptidase S1 family. CLIP subfamily. In terms of assembly, interacts (via N-terminal prodomain) with ea/easter (via Peptidase domain); leads to proteolytic activation of ea by snk. This interaction does not require sulfation of a vitelline membrane component by pip but proteolytic cleavage of ea by snk does. Post-translationally, proteolytically activated by gd. May also be cleaved by another protease.

It is found in the secreted. In terms of biological role, component of the extracellular signaling pathway that establishes the dorsal-ventral pathway of the embryo. A protease cascade involving ndl, gd, snk and ea results in activation of the spz Toll receptor ligand; acts downstream of ndl and gd. Activation of ea requires both activation of the ndl-gd-snk protease cascade and sulfation of a vitelline membrane component by pip. Localized activation of the Toll receptor in the ventral region of the embryo defines cell identities along the dorsal-ventral continuum. This chain is Serine protease snk, found in Drosophila melanogaster (Fruit fly).